Consider the following 234-residue polypeptide: Cell fusion protein dni1 (234 aa).

A signal peptide spans 1–32; it reads MLFLHSVVQGTGTLCTLAAWILLALVMTGCQS. At 33–96 the chain is on the extracellular side; the sequence is STTSKFQLFS…RSKFLINEVH (64 aa). A helical transmembrane segment spans residues 97–117; it reads PWMIVFSFCVCGVSFLMGVVS. Over 118-132 the chain is Cytoplasmic; it reads SLPLIGRLEFLRNIR. Residues 133–153 form a helical membrane-spanning segment; sequence ISLSFFSFFSILVTALFAHVA. The Extracellular segment spans residues 154-178; the sequence is VSSFVMAVGNGTQNRVTASLGKKAM. The helical transmembrane segment at 179–199 threads the bilayer; it reads IFLWCSMGLVTLTGITDSIIL. At 200 to 234 the chain is on the cytoplasmic side; it reads LVTSRTKKIRKTILEKSKVLTPSSSFSSKSSTTKY.

It belongs to the SUR7 family.

It is found in the cell membrane. Its subcellular location is the cell tip. In terms of biological role, cell membrane protein which plays a relevant role in coordinating membrane organization and cell wall remodeling during mating. The sequence is that of Cell fusion protein dni1 (dni1) from Schizosaccharomyces pombe (strain 972 / ATCC 24843) (Fission yeast).